A 384-amino-acid chain; its full sequence is S-adenosylmethionine synthase (384 aa).

An ATP-binding site is contributed by His15. Asp17 contributes to the Mg(2+) binding site. Residue Glu43 coordinates K(+). Glu56 and Gln99 together coordinate L-methionine. Residues 99-109 (QSSDINQGVDR) are flexible loop. ATP-binding positions include 164-166 (DAK), 230-231 (RF), Asp239, 245-246 (RK), Ala262, and Lys266. Asp239 contacts L-methionine. Lys270 is an L-methionine binding site.

It belongs to the AdoMet synthase family. In terms of assembly, homotetramer; dimer of dimers. Mg(2+) is required as a cofactor. The cofactor is K(+).

It is found in the cytoplasm. The catalysed reaction is L-methionine + ATP + H2O = S-adenosyl-L-methionine + phosphate + diphosphate. It participates in amino-acid biosynthesis; S-adenosyl-L-methionine biosynthesis; S-adenosyl-L-methionine from L-methionine: step 1/1. Its function is as follows. Catalyzes the formation of S-adenosylmethionine (AdoMet) from methionine and ATP. The overall synthetic reaction is composed of two sequential steps, AdoMet formation and the subsequent tripolyphosphate hydrolysis which occurs prior to release of AdoMet from the enzyme. This chain is S-adenosylmethionine synthase, found in Pasteurella multocida (strain Pm70).